A 114-amino-acid polypeptide reads, in one-letter code: Superoxide dismutase [Cu-Zn] (114 aa).

His-37, His-39, and His-54 together coordinate Cu cation. A disordered region spans residues 48 to 76; the sequence is CMSSGPHFNPRSKEHGAPTDENRHLGDLG. Zn(2+)-binding residues include His-54, His-62, His-71, and Asp-74. Residues 58-73 are compositionally biased toward basic and acidic residues; sequence RSKEHGAPTDENRHLG. Residue His-111 coordinates Cu cation.

Belongs to the Cu-Zn superoxide dismutase family. Homodimer. Cu cation is required as a cofactor. Requires Zn(2+) as cofactor.

Its subcellular location is the cytoplasm. The enzyme catalyses 2 superoxide + 2 H(+) = H2O2 + O2. Functionally, destroys radicals which are normally produced within the cells and which are toxic to biological systems. The sequence is that of Superoxide dismutase [Cu-Zn] from Drosophila obscura (Fruit fly).